The chain runs to 520 residues: 2-isopropylmalate synthase (520 aa).

Residues Val12–Thr274 form the Pyruvate carboxyltransferase domain. Mn(2+)-binding residues include Asp21, His209, His211, and Asn245. Residues Lys398 to Ser520 form a regulatory domain region.

This sequence belongs to the alpha-IPM synthase/homocitrate synthase family. LeuA type 1 subfamily. As to quaternary structure, homodimer. Mn(2+) is required as a cofactor.

It is found in the cytoplasm. The enzyme catalyses 3-methyl-2-oxobutanoate + acetyl-CoA + H2O = (2S)-2-isopropylmalate + CoA + H(+). The protein operates within amino-acid biosynthesis; L-leucine biosynthesis; L-leucine from 3-methyl-2-oxobutanoate: step 1/4. Its function is as follows. Catalyzes the condensation of the acetyl group of acetyl-CoA with 3-methyl-2-oxobutanoate (2-ketoisovalerate) to form 3-carboxy-3-hydroxy-4-methylpentanoate (2-isopropylmalate). This chain is 2-isopropylmalate synthase, found in Bradyrhizobium diazoefficiens (strain JCM 10833 / BCRC 13528 / IAM 13628 / NBRC 14792 / USDA 110).